The chain runs to 374 residues: Anhydro-N-acetylmuramic acid kinase (374 aa).

15-22 (GTSADGID) is an ATP binding site.

The protein belongs to the anhydro-N-acetylmuramic acid kinase family.

It catalyses the reaction 1,6-anhydro-N-acetyl-beta-muramate + ATP + H2O = N-acetyl-D-muramate 6-phosphate + ADP + H(+). It functions in the pathway amino-sugar metabolism; 1,6-anhydro-N-acetylmuramate degradation. It participates in cell wall biogenesis; peptidoglycan recycling. Functionally, catalyzes the specific phosphorylation of 1,6-anhydro-N-acetylmuramic acid (anhMurNAc) with the simultaneous cleavage of the 1,6-anhydro ring, generating MurNAc-6-P. Is required for the utilization of anhMurNAc either imported from the medium or derived from its own cell wall murein, and thus plays a role in cell wall recycling. The sequence is that of Anhydro-N-acetylmuramic acid kinase from Xanthomonas axonopodis pv. citri (strain 306).